We begin with the raw amino-acid sequence, 344 residues long: Putative replication factor C small subunit L499 (344 aa).

57–64 lines the ATP pocket; sequence GPSGSGKT.

This sequence belongs to the activator 1 small subunits family. RfcS subfamily.

Functionally, part of the RFC clamp loader complex which loads the PCNA sliding clamp onto DNA. The chain is Putative replication factor C small subunit L499 from Acanthamoeba polyphaga mimivirus (APMV).